The primary structure comprises 384 residues: Na(+)/H(+) antiporter NhaA (384 aa).

A run of 11 helical transmembrane segments spans residues 7 to 27, 58 to 78, 94 to 114, 124 to 144, 153 to 173, 179 to 199, 204 to 224, 256 to 276, 285 to 305, 325 to 345, and 357 to 377; these read FYNL…LAII, LLLW…GLEI, LVPA…FIFF, GWAI…SLLG, ILLT…IALF, SLLS…LNYF, ISVF…SGVH, VVFL…FVGL, VVLG…FLSL, VYGI…IGSL, and MVKI…FLVL.

It belongs to the NhaA Na(+)/H(+) (TC 2.A.33) antiporter family.

It is found in the cell inner membrane. The enzyme catalyses Na(+)(in) + 2 H(+)(out) = Na(+)(out) + 2 H(+)(in). In terms of biological role, na(+)/H(+) antiporter that extrudes sodium in exchange for external protons. In Legionella pneumophila (strain Corby), this protein is Na(+)/H(+) antiporter NhaA.